The primary structure comprises 195 residues: Imidazoleglycerol-phosphate dehydratase (195 aa).

This sequence belongs to the imidazoleglycerol-phosphate dehydratase family.

It localises to the cytoplasm. The catalysed reaction is D-erythro-1-(imidazol-4-yl)glycerol 3-phosphate = 3-(imidazol-4-yl)-2-oxopropyl phosphate + H2O. It functions in the pathway amino-acid biosynthesis; L-histidine biosynthesis; L-histidine from 5-phospho-alpha-D-ribose 1-diphosphate: step 6/9. This is Imidazoleglycerol-phosphate dehydratase from Sphingopyxis alaskensis (strain DSM 13593 / LMG 18877 / RB2256) (Sphingomonas alaskensis).